Reading from the N-terminus, the 474-residue chain is Poly(A) polymerase catalytic subunit (474 aa).

Residues Asp-193 and Asp-195 contribute to the active site.

This sequence belongs to the poxviridae poly(A) polymerase catalytic subunit family. As to quaternary structure, heterodimer of a large (catalytic) subunit and a small (regulatory) subunit.

The enzyme catalyses RNA(n) + ATP = RNA(n)-3'-adenine ribonucleotide + diphosphate. Polymerase that creates the 3'-poly(A) tail of mRNA's. The sequence is that of Poly(A) polymerase catalytic subunit (PAPL) from Bos taurus (Bovine).